A 157-amino-acid chain; its full sequence is Protein-export protein SecB (157 aa).

The protein belongs to the SecB family. In terms of assembly, homotetramer, a dimer of dimers. One homotetramer interacts with 1 SecA dimer.

The protein resides in the cytoplasm. Its function is as follows. One of the proteins required for the normal export of preproteins out of the cell cytoplasm. It is a molecular chaperone that binds to a subset of precursor proteins, maintaining them in a translocation-competent state. It also specifically binds to its receptor SecA. The protein is Protein-export protein SecB of Tolumonas auensis (strain DSM 9187 / NBRC 110442 / TA 4).